A 498-amino-acid chain; its full sequence is Probable lysophospholipase BODYGUARD 3 (498 aa).

Positions 1–55 are cleaved as a signal peptide; it reads MAVMKIKGAATVAGTWLNEAVSFVVFCILDIVDSFLCLLYKAADYLFEAEWKPCY. Residue C56 is the site of N-palmitoyl cysteine attachment. In terms of domain architecture, AB hydrolase-1 spans 220–326; the sequence is VLFIHGFISS…LTLLAPPYYP (107 aa). The active site involves H224. Catalysis depends on S297, which acts as the Nucleophile. Catalysis depends on charge relay system residues D446 and H474.

It is found in the cell membrane. The protein localises to the secreted. It localises to the cell wall. Functionally, involved in cuticle development and morphogenesis. This Arabidopsis thaliana (Mouse-ear cress) protein is Probable lysophospholipase BODYGUARD 3.